The primary structure comprises 232 residues: T-cell surface glycoprotein CD1b-3 (232 aa).

Topologically, residues 1–201 are extracellular; that stretch reads GLQEFQFEYP…LYWGHPMYIG (201 aa). Intrachain disulfides connect Cys19–Cys83, Cys48–Cys62, and Cys123–Cys178. N-linked (GlcNAc...) asparagine glycosylation is present at Asn45. Residues 84-194 enclose the Ig-like domain; that stretch reads PRYLLGVLDA…LGDQDIILYW (111 aa). The chain crosses the membrane as a helical span at residues 202-222; that stretch reads LIFVAIIVPSLILLICLALWF. Over 223–232 the chain is Cytoplasmic; it reads WRRWSYQTVL.

Heterodimer with B2M (beta-2-microglobulin). Interacts with saposin C.

The protein resides in the cell membrane. It is found in the endosome membrane. Its subcellular location is the lysosome membrane. In terms of biological role, antigen-presenting protein that binds self and non-self lipid and glycolipid antigens and presents them to T-cell receptors on natural killer T-cells. This Ovis aries (Sheep) protein is T-cell surface glycoprotein CD1b-3.